The sequence spans 207 residues: Mediator of RNA polymerase II transcription subunit 21 (207 aa).

Residues 37-121 form a disordered region; sequence PHPDVPDAAP…PDSPRTFASR (85 aa). The span at 65–80 shows a compositional bias: low complexity; sequence PVPAQSQASPPAQNPA. Positions 84 to 96 are enriched in gly residues; the sequence is AGAGTSVGEGGQT. The segment covering 97–108 has biased composition (low complexity); sequence PGPAAGAGADPN. Residues 146–196 adopt a coiled-coil conformation; it reads IDSSEAEQEKRIRELEGELRRVEEERELKMRELKRLRRTLENVLRAVETGL.

The protein belongs to the Mediator complex subunit 21 family. In terms of assembly, component of the Mediator complex.

It localises to the nucleus. Component of the Mediator complex, a coactivator involved in the regulated transcription of nearly all RNA polymerase II-dependent genes. Mediator functions as a bridge to convey information from gene-specific regulatory proteins to the basal RNA polymerase II transcription machinery. Mediator is recruited to promoters by direct interactions with regulatory proteins and serves as a scaffold for the assembly of a functional preinitiation complex with RNA polymerase II and the general transcription factors. This is Mediator of RNA polymerase II transcription subunit 21 (srb7) from Neosartorya fischeri (strain ATCC 1020 / DSM 3700 / CBS 544.65 / FGSC A1164 / JCM 1740 / NRRL 181 / WB 181) (Aspergillus fischerianus).